The primary structure comprises 182 residues: Ribulose bisphosphate carboxylase small subunit, chloroplastic 1 (182 aa).

The N-terminal 42 residues, 1–42, are a transit peptide targeting the chloroplast; sequence MASIMMNKSVVLSKECAKPLATPKVTLNKRGFATTIATKNRE.

It belongs to the RuBisCO small chain family. Heterohexadecamer of 8 large and 8 small subunits.

The protein resides in the plastid. It localises to the chloroplast. RuBisCO catalyzes two reactions: the carboxylation of D-ribulose 1,5-bisphosphate, the primary event in carbon dioxide fixation, as well as the oxidative fragmentation of the pentose substrate. Both reactions occur simultaneously and in competition at the same active site. Although the small subunit is not catalytic it is essential for maximal activity. The polypeptide is Ribulose bisphosphate carboxylase small subunit, chloroplastic 1 (Acetabularia acetabulum (Mermaid's wine glass)).